A 183-amino-acid polypeptide reads, in one-letter code: Small ribosomal subunit protein eS10z (183 aa).

Residues 91 to 183 (LKKSARPPGR…GAGPTSSSME (93 aa)) are disordered. The span at 109-130 (DRPRGPPRFEGDRPRFGDRDGY) shows a compositional bias: basic and acidic residues. 2 stretches are compositionally biased toward gly residues: residues 131–146 (RGGPRGAPGDFGGEKG) and 161–175 (GRPGFGRGGGGGFGA).

The protein belongs to the eukaryotic ribosomal protein eS10 family.

It localises to the cytoplasm. The polypeptide is Small ribosomal subunit protein eS10z (Oryza sativa subsp. japonica (Rice)).